A 356-amino-acid chain; its full sequence is Probable G-protein coupled receptor 32 (356 aa).

Residues Met-1–Pro-44 are Extracellular-facing. N-linked (GlcNAc...) asparagine glycosylation occurs at Asn-30. A helical membrane pass occupies residues Leu-45–Met-67. Residues Thr-68–Thr-78 lie on the Cytoplasmic side of the membrane. The chain crosses the membrane as a helical span at residues Val-79–Tyr-100. The Extracellular segment spans residues Tyr-101–Leu-116. An intrachain disulfide couples Cys-114 to Cys-191. Residues Tyr-117–Val-137 traverse the membrane as a helical segment. The Cytoplasmic segment spans residues Asp-138–Gln-156. A helical transmembrane segment spans residues Arg-157–Lys-178. Residues Phe-179–His-220 are Extracellular-facing. N-linked (GlcNAc...) asparagine glycosylation is present at Asn-199. Residues Phe-221–Ala-241 traverse the membrane as a helical segment. At Lys-242 to Leu-257 the chain is on the cytoplasmic side. A helical transmembrane segment spans residues Leu-258–Leu-280. Topologically, residues Trp-281–Ala-300 are extracellular. Residues Ser-301–Gly-320 traverse the membrane as a helical segment. Topologically, residues Arg-321–Glu-356 are cytoplasmic.

It belongs to the G-protein coupled receptor 1 family. As to expression, expressed in resting primary human macrophages.

Its subcellular location is the cell membrane. Functionally, G-protein coupled receptor that binds to several ligands including resolvin D1 (RvD1) with high affinity, leading to rapid and transient activation of numerous intracellular signaling pathways. In macrophages, enhances the RvD1-stimulated phagocytic and clearance functions. Macrophages migrate less toward different chemoattractant stimuli but phagocytose more microbial particles. Prevents the increase in Ca(2+) and activation of ERK1/2 used by histamine and its H1 receptor subtype to induce goblet cell secretion by activating PKC and GRK2 to counter-regulate the histamine receptor. The protein is Probable G-protein coupled receptor 32 (GPR32) of Homo sapiens (Human).